Reading from the N-terminus, the 490-residue chain is Aspartyl/glutamyl-tRNA(Asn/Gln) amidotransferase subunit B (490 aa).

This sequence belongs to the GatB/GatE family. GatB subfamily. As to quaternary structure, heterotrimer of A, B and C subunits.

The enzyme catalyses L-glutamyl-tRNA(Gln) + L-glutamine + ATP + H2O = L-glutaminyl-tRNA(Gln) + L-glutamate + ADP + phosphate + H(+). It carries out the reaction L-aspartyl-tRNA(Asn) + L-glutamine + ATP + H2O = L-asparaginyl-tRNA(Asn) + L-glutamate + ADP + phosphate + 2 H(+). In terms of biological role, allows the formation of correctly charged Asn-tRNA(Asn) or Gln-tRNA(Gln) through the transamidation of misacylated Asp-tRNA(Asn) or Glu-tRNA(Gln) in organisms which lack either or both of asparaginyl-tRNA or glutaminyl-tRNA synthetases. The reaction takes place in the presence of glutamine and ATP through an activated phospho-Asp-tRNA(Asn) or phospho-Glu-tRNA(Gln). The chain is Aspartyl/glutamyl-tRNA(Asn/Gln) amidotransferase subunit B from Burkholderia thailandensis (strain ATCC 700388 / DSM 13276 / CCUG 48851 / CIP 106301 / E264).